The primary structure comprises 130 residues: Small ribosomal subunit protein uS8 (130 aa).

Belongs to the universal ribosomal protein uS8 family. In terms of assembly, part of the 30S ribosomal subunit.

One of the primary rRNA binding proteins, it binds directly to 16S rRNA central domain where it helps coordinate assembly of the platform of the 30S subunit. In Methanoregula boonei (strain DSM 21154 / JCM 14090 / 6A8), this protein is Small ribosomal subunit protein uS8.